The sequence spans 611 residues: Glutamine--fructose-6-phosphate aminotransferase [isomerizing] (611 aa).

The active-site Nucleophile; for GATase activity is C2. Residues 2-219 enclose the Glutamine amidotransferase type-2 domain; that stretch reads CGIVGAVAER…EGDIAEIRRD (218 aa). SIS domains are found at residues 287–427 and 460–601; these read AADL…VRGT and IAEL…VDQP. The For Fru-6P isomerization activity role is filled by K606.

Homodimer.

The protein resides in the cytoplasm. The catalysed reaction is D-fructose 6-phosphate + L-glutamine = D-glucosamine 6-phosphate + L-glutamate. Functionally, catalyzes the first step in hexosamine metabolism, converting fructose-6P into glucosamine-6P using glutamine as a nitrogen source. The sequence is that of Glutamine--fructose-6-phosphate aminotransferase [isomerizing] from Pseudomonas putida (strain ATCC 47054 / DSM 6125 / CFBP 8728 / NCIMB 11950 / KT2440).